The following is an 882-amino-acid chain: Alanine--tRNA ligase (882 aa).

4 residues coordinate Zn(2+): His-574, His-578, Cys-682, and His-686. The tract at residues 853-882 (GGRGGGKGALAQGGGLDPRKAREALPGLLP) is disordered. The span at 854 to 868 (GRGGGKGALAQGGGL) shows a compositional bias: gly residues.

This sequence belongs to the class-II aminoacyl-tRNA synthetase family. It depends on Zn(2+) as a cofactor.

The protein localises to the cytoplasm. It carries out the reaction tRNA(Ala) + L-alanine + ATP = L-alanyl-tRNA(Ala) + AMP + diphosphate. In terms of biological role, catalyzes the attachment of alanine to tRNA(Ala) in a two-step reaction: alanine is first activated by ATP to form Ala-AMP and then transferred to the acceptor end of tRNA(Ala). Also edits incorrectly charged Ser-tRNA(Ala) and Gly-tRNA(Ala) via its editing domain. In Thermus thermophilus (strain ATCC BAA-163 / DSM 7039 / HB27), this protein is Alanine--tRNA ligase.